The primary structure comprises 339 residues: Ketol-acid reductoisomerase (NADP(+)) (339 aa).

The KARI N-terminal Rossmann domain occupies 1–182 (MRVYYDRDAD…GGGRSGVIET (182 aa)). NADP(+) contacts are provided by residues 24 to 27 (YGSQ), Arg-48, Ser-51, Thr-53, and 83 to 86 (DELQ). The active site involves His-108. Residue Gly-134 coordinates NADP(+). The KARI C-terminal knotted domain maps to 183-328 (TFKEECETDL…GKLRAMMPWI (146 aa)). Asp-191, Glu-195, Glu-227, and Glu-231 together coordinate Mg(2+). A substrate-binding site is contributed by Ser-252.

It belongs to the ketol-acid reductoisomerase family. Requires Mg(2+) as cofactor.

The enzyme catalyses (2R)-2,3-dihydroxy-3-methylbutanoate + NADP(+) = (2S)-2-acetolactate + NADPH + H(+). It catalyses the reaction (2R,3R)-2,3-dihydroxy-3-methylpentanoate + NADP(+) = (S)-2-ethyl-2-hydroxy-3-oxobutanoate + NADPH + H(+). It functions in the pathway amino-acid biosynthesis; L-isoleucine biosynthesis; L-isoleucine from 2-oxobutanoate: step 2/4. The protein operates within amino-acid biosynthesis; L-valine biosynthesis; L-valine from pyruvate: step 2/4. Its function is as follows. Involved in the biosynthesis of branched-chain amino acids (BCAA). Catalyzes an alkyl-migration followed by a ketol-acid reduction of (S)-2-acetolactate (S2AL) to yield (R)-2,3-dihydroxy-isovalerate. In the isomerase reaction, S2AL is rearranged via a Mg-dependent methyl migration to produce 3-hydroxy-3-methyl-2-ketobutyrate (HMKB). In the reductase reaction, this 2-ketoacid undergoes a metal-dependent reduction by NADPH to yield (R)-2,3-dihydroxy-isovalerate. In Brucella abortus (strain S19), this protein is Ketol-acid reductoisomerase (NADP(+)).